The following is a 718-amino-acid chain: Polyribonucleotide nucleotidyltransferase (718 aa).

Positions 496 and 502 each coordinate Mg(2+). A KH domain is found at 563–622; the sequence is PRLLTIKIDPDMIGLVIGPGGKTIKGITEETGAKIDIEDDGTVTISAVDENKAKRARNIV. Residues 632–700 enclose the S1 motif domain; sequence GDVYAGRVTR…NKGRINLTRL (69 aa).

As to quaternary structure, may form homodimers or higher order multimers. Interacts with RNase E (rne). Requires Mg(2+) as cofactor.

Its subcellular location is the cytoplasm. It catalyses the reaction RNA(n+1) + phosphate = RNA(n) + a ribonucleoside 5'-diphosphate. In terms of biological role, involved in mRNA degradation. Catalyzes the phosphorolysis of single-stranded polyribonucleotides processively in the 3'- to 5'-direction. In Nostoc sp. (strain PCC 7120 / SAG 25.82 / UTEX 2576), this protein is Polyribonucleotide nucleotidyltransferase.